Reading from the N-terminus, the 335-residue chain is UPF0324 membrane protein gbs1193 (335 aa).

Helical transmembrane passes span 20–42, 57–79, 84–106, 116–138, 151–173, 210–232, 253–275, 285–304, and 311–333; these read SWLL…IGII, IAFT…LNLM, VGIS…AYVL, IATL…TAPV, SVIF…FIGL, GATI…LSIY, VLYF…SLRI, FFIV…SKLI, and ILLG…AILG.

It belongs to the UPF0324 family.

The protein localises to the cell membrane. This is UPF0324 membrane protein gbs1193 from Streptococcus agalactiae serotype III (strain NEM316).